The sequence spans 89 residues: Small ribosomal subunit protein uS14 (89 aa).

Belongs to the universal ribosomal protein uS14 family. In terms of assembly, part of the 30S ribosomal subunit. Contacts proteins S3 and S10.

Its function is as follows. Binds 16S rRNA, required for the assembly of 30S particles and may also be responsible for determining the conformation of the 16S rRNA at the A site. The sequence is that of Small ribosomal subunit protein uS14 from Chlorobium limicola (strain DSM 245 / NBRC 103803 / 6330).